Here is a 57-residue protein sequence, read N- to C-terminus: Potassium channel toxin alpha-KTx 23.3 (57 aa).

An N-terminal signal peptide occupies residues 1–23; sequence MKMSIVIILLLFTCLIATNGASG. 4 cysteine pairs are disulfide-bonded: Cys26/Cys46, Cys32/Cys51, Cys36/Cys53, and Cys41/Cys56.

It belongs to the short scorpion toxin superfamily. Potassium channel inhibitor family. Alpha-KTx 23 subfamily. Expressed by the venom gland.

It is found in the secreted. Functionally, this toxin shows both immunosuppressive and anti-inflammatory activities. It has the potential to inhibit human T cell activation, since it reduces IL-2 secretion and the expression of T cell activation marker CD69 and acts as an anti-inflammatory agent, since it provokes the reduction of secretion of both IFN-gamma and TNF-alpha. In vivo, the delayed-type hypersensitivity response in rat autoimmune disease model is ameliorated in the presence of this toxin. Acts by blocking Kv1.3/KCNA3 potassium channels of T-lymphocytes. This Scorpiops tibetanus (Scorpion) protein is Potassium channel toxin alpha-KTx 23.3.